A 196-amino-acid polypeptide reads, in one-letter code: SAGA-associated factor 11 homolog (196 aa).

Residues Cys102 to Cys123 form an SGF11-type zinc finger. A disordered region spans residues Thr140–Phe196. A compositionally biased stretch (polar residues) spans Glu142–Val153. The residue at position 172 (Ser172) is a Phosphoserine. The segment covering Asn182–Phe196 has biased composition (low complexity).

Belongs to the SGF11 family. Component of some SAGA transcription coactivator-HAT complexes, at least composed of Ada2b, not/nonstop, Pcaf/Gcn5, Sgf11 and Spt3. Within the SAGA complex, Sgf11, e(y)2, and not/nonstop form an additional subcomplex of SAGA called the DUB module (deubiquitination module). Interacts directly with not/nonstop. Interacts with the AMEX complex component xmas-2. Interacts with Cbp80; important for promoter recruitment of Sgf11 that is not associated with the DUB module.

The protein resides in the nucleus. Its subcellular location is the nucleoplasm. It localises to the cytoplasm. Its function is as follows. Component of the transcription regulatory histone acetylation (HAT) complex SAGA, a multiprotein complex that activates transcription by remodeling chromatin and mediating histone acetylation and deubiquitination. Within the SAGA complex, participates in a subcomplex that specifically deubiquitinates histone H2B. The SAGA complex is recruited to specific gene promoters by activators, where it is required for transcription. Required for nuclear receptor-mediated transactivation. Binds independently on SAGA to promoters in an RNA-dependent manner. Binds to mRNA and is essential for total mRNA export from the nucleus. Required to counteract heterochromatin silencing. Controls the development of neuronal connectivity in visual system by being required for accurate axon targeting in the optic lobe. Required for expression of ecdysone-induced genes such as br/broad. The sequence is that of SAGA-associated factor 11 homolog from Drosophila persimilis (Fruit fly).